The following is a 365-amino-acid chain: Alanine racemase (365 aa).

K32 functions as the Proton acceptor; specific for D-alanine in the catalytic mechanism. K32 is subject to N6-(pyridoxal phosphate)lysine. R128 is a binding site for substrate. Residue Y257 is the Proton acceptor; specific for L-alanine of the active site. A substrate-binding site is contributed by M305.

The protein belongs to the alanine racemase family. The cofactor is pyridoxal 5'-phosphate.

The enzyme catalyses L-alanine = D-alanine. The protein operates within amino-acid biosynthesis; D-alanine biosynthesis; D-alanine from L-alanine: step 1/1. Functionally, catalyzes the interconversion of L-alanine and D-alanine. May also act on other amino acids. In Francisella tularensis subsp. mediasiatica (strain FSC147), this protein is Alanine racemase (alr).